The sequence spans 446 residues: Xanthone prenyltransferase A (446 aa).

Positions 113, 199, 201, 263, 265, 267, 369, and 440 each coordinate dimethylallyl diphosphate.

The protein belongs to the tryptophan dimethylallyltransferase family.

It functions in the pathway secondary metabolite biosynthesis. Functionally, xanthone prenyltransferase involved in the conversion of monodictyphenone to the prenyl xanthones such as emericellin, shamixanthone and epishamixanthone. Monodictyphenone is first converted to variecoxanthone A via a paeciloxanthone intermediate by the consecutive actions of the FAD-dependent monooxygenase mdpD and the xanthone prenyltransferase xptB. XptB catalyzes regular O-prenylation at the hydroxy group of C-7 of the xanthone ring. Variecoxanthone A is further prenylated to emericellin by xptA before being reduced to shamixanthone and epishamixanthone by the dehydrogenase xptC. The polypeptide is Xanthone prenyltransferase A (Emericella nidulans (strain FGSC A4 / ATCC 38163 / CBS 112.46 / NRRL 194 / M139) (Aspergillus nidulans)).